The following is a 173-amino-acid chain: Flavodoxin 2 (173 aa).

In terms of domain architecture, Flavodoxin-like spans 3–165; it reads MGLFYGSSTC…RIQSWCEQIL (163 aa).

The protein belongs to the flavodoxin family. Requires FMN as cofactor.

Its function is as follows. Low-potential electron donor to a number of redox enzymes. In Escherichia coli O157:H7, this protein is Flavodoxin 2 (fldB).